The chain runs to 534 residues: Protein tweety homolog 2 (534 aa).

Topologically, residues 1-44 (MAAARVEYIAPWWVYWLHNFPHVDLSLRQKSPDFNPKDPGYQQT) are extracellular. A helical membrane pass occupies residues 45–65 (LLFVALIVALCAAVNLLFVSV). The Cytoplasmic segment spans residues 66–87 (YLICLCCCKKEDETETKKTSSC). The helical transmembrane segment at 88 to 108 (CVTWTAAVSGLLCCAAVGIGF) threads the bilayer. At 109–213 (YGNSETNDGV…QTSTIEYYRW (105 aa)) the chain is on the extracellular side. Ca(2+) contacts are provided by Glu113 and Asp116. Residue Asn129 is glycosylated (N-linked (GlcNAc...) asparagine). The short motif at 164 to 166 (RGD) is the RGD element. An N-linked (GlcNAc...) asparagine glycan is attached at Asn197. A helical membrane pass occupies residues 214–234 (LSYLLLFISYVVICLVTCVGL). The Cytoplasmic segment spans residues 235–240 (AKKSKC). A helical transmembrane segment spans residues 241 to 261 (LLLIMLCFGLIALMLSWTSLA). The Extracellular segment spans residues 262-388 (LETSSAMGTS…IGICYDGVEG (127 aa)). 2 cysteine pairs are disulfide-bonded: Cys274–Cys382 and Cys300–Cys367. N-linked (GlcNAc...) asparagine glycosylation is found at Asn283 and Asn352. Residues 389–409 (MLYLGLFSLLAALAFTAMVCA) form a helical membrane-spanning segment. The Cytoplasmic portion of the chain corresponds to 410–534 (MPQAWKHLEA…SSIYSNVFPA (125 aa)).

It belongs to the tweety family. Forms cis-homodimers in the presence of Ca(+2) and forms monomers and trans-dimers in the absence of Ca(2+).

The protein localises to the cell membrane. It carries out the reaction chloride(in) = chloride(out). The enzyme catalyses L-glutamate(out) = L-glutamate(in). Functionally, may act as a calcium-independent, swelling-dependent volume-regulated anion channel (VRAC-swell) which plays a pivotal role in the process of regulatory volume decrease (RVD) in the brain through the efflux of anions like chloride and organic osmolytes like glutamate. Probable large-conductance Ca(2+)-activated chloride channel. The protein is Protein tweety homolog 2 (ttyh2) of Xenopus tropicalis (Western clawed frog).